A 596-amino-acid polypeptide reads, in one-letter code: Alkaline phosphatase 4 (596 aa).

The signal sequence occupies residues 1-20; sequence MHCLVILGFLLGSLVAFSWA. Asp93 contacts Mg(2+). A Zn(2+)-binding site is contributed by Asp93. The active-site Phosphoserine intermediate is Ser144. Mg(2+) is bound by residues His202 and Thr204. N-linked (GlcNAc...) asparagine glycans are attached at residues Asn262 and Asn297. Glu369 serves as a coordination point for Mg(2+). Asp374 and His378 together coordinate Zn(2+). Asn401 carries an N-linked (GlcNAc...) asparagine glycan. 2 residues coordinate Zn(2+): Asp415 and His416. N-linked (GlcNAc...) asparagine glycosylation is found at Asn464 and Asn470. His504 contacts Zn(2+). A disulfide bridge connects residues Cys539 and Cys550. Positions 548–566 are enriched in basic and acidic residues; the sequence is DSCEDHKDGQKDRPLDKPN. Residues 548–570 are disordered; that stretch reads DSCEDHKDGQKDRPLDKPNPKRN. Asn570 carries the GPI-anchor amidated asparagine lipid modification. A helical membrane pass occupies residues 571 to 591; sequence GATVVGASLIPILTAATAAIL. The propeptide at 571–596 is removed in mature form; it reads GATVVGASLIPILTAATAAILRGRGL.

The protein belongs to the alkaline phosphatase family. In terms of assembly, homodimer. Mg(2+) serves as cofactor. Requires Zn(2+) as cofactor. In terms of tissue distribution, ellipsoid body ring neurons in the adult brain and in the lower Malpighian tubule and ureter.

Its subcellular location is the cell membrane. It catalyses the reaction a phosphate monoester + H2O = an alcohol + phosphate. Its function is as follows. Important role in neural and renal epithelial function. This chain is Alkaline phosphatase 4, found in Drosophila melanogaster (Fruit fly).